A 146-amino-acid polypeptide reads, in one-letter code: Cytochrome c-type biogenesis protein CcmE (146 aa).

The Cytoplasmic portion of the chain corresponds to 1–8; sequence MNPRRKKR. Residues 9-29 form a helical; Signal-anchor for type II membrane protein membrane-spanning segment; that stretch reads LGLILALVLGASATVGLMLYA. The Periplasmic segment spans residues 30–146; it reads LNQNMDLFYT…EVAEAMKKTH (117 aa). Heme is bound by residues histidine 129 and tyrosine 133.

Belongs to the CcmE/CycJ family.

It is found in the cell inner membrane. Functionally, heme chaperone required for the biogenesis of c-type cytochromes. Transiently binds heme delivered by CcmC and transfers the heme to apo-cytochromes in a process facilitated by CcmF and CcmH. This chain is Cytochrome c-type biogenesis protein CcmE, found in Aliivibrio salmonicida (strain LFI1238) (Vibrio salmonicida (strain LFI1238)).